The chain runs to 195 residues: MNTHEVEELRQKLLEDARKKSEEIIREAEREAERIIEEAERKWREKAEQEREKIITNARLEAQKIISEARRNYRITISKAKAEVINKILEEAKIRLTNRIGFDIEESLKKLLDEALYYIENPSKIIINPRDRDFIKKVLKEKGLKNIEIVESDNILGGLIIESIDGERVDNSYNTRLERAKSIVLAELNIILWGK.

The protein belongs to the V-ATPase E subunit family. As to quaternary structure, has multiple subunits with at least A(3), B(3), C, D, E, F, H, I and proteolipid K(x).

The protein resides in the cell membrane. Its function is as follows. Component of the A-type ATP synthase that produces ATP from ADP in the presence of a proton gradient across the membrane. In Staphylothermus marinus (strain ATCC 43588 / DSM 3639 / JCM 9404 / F1), this protein is A-type ATP synthase subunit E.